The chain runs to 375 residues: Nicotinate-nucleotide--dimethylbenzimidazole phosphoribosyltransferase (375 aa).

E323 (proton acceptor) is an active-site residue. Positions 344–375 are disordered; sequence LPEKPEELEAGEGPEAAEESSPEPENPEALAE. A compositionally biased stretch (acidic residues) spans 351–375; that stretch reads LEAGEGPEAAEESSPEPENPEALAE.

It belongs to the CobT family.

The catalysed reaction is 5,6-dimethylbenzimidazole + nicotinate beta-D-ribonucleotide = alpha-ribazole 5'-phosphate + nicotinate + H(+). It participates in nucleoside biosynthesis; alpha-ribazole biosynthesis; alpha-ribazole from 5,6-dimethylbenzimidazole: step 1/2. Catalyzes the synthesis of alpha-ribazole-5'-phosphate from nicotinate mononucleotide (NAMN) and 5,6-dimethylbenzimidazole (DMB). The protein is Nicotinate-nucleotide--dimethylbenzimidazole phosphoribosyltransferase of Streptomyces avermitilis (strain ATCC 31267 / DSM 46492 / JCM 5070 / NBRC 14893 / NCIMB 12804 / NRRL 8165 / MA-4680).